The sequence spans 86 residues: Small ribosomal subunit protein uS17 (86 aa).

It belongs to the universal ribosomal protein uS17 family. Part of the 30S ribosomal subunit.

Functionally, one of the primary rRNA binding proteins, it binds specifically to the 5'-end of 16S ribosomal RNA. The sequence is that of Small ribosomal subunit protein uS17 from Helicobacter acinonychis (strain Sheeba).